Reading from the N-terminus, the 752-residue chain is Zinc finger protein 425 (752 aa).

The 72-residue stretch at 9–80 (VTFDDVALYF…EQGCLDKTRR (72 aa)) folds into the KRAB domain. C2H2-type zinc fingers lie at residues 190-212 (YSCYVCRKVFQVRRDLLKHKRSH), 246-268 (FQCSECEKSYFLKGSLVTHQVVH), 274-296 (YPCPECDKTFRYRANLKKHLCLH), 302-324 (FCCGECGRAFVQQCELTEHLRLH), 330-352 (FQCPQCDRCFRLKRGMKVHLTQH), 358-380 (FHCPECGRSFSRKAALKTHQRTH), 386-408 (FSCGECGRKFIYKIKLDEHIRVH), 414-436 (FSCPECNKSFRLKRSLKAHGLQH), 442-464 (FQCPECSRGFFWRNAMRAHQRLH), 470-492 (FPCAECGKRFTRPSKLACHTRVH), 498-520 (FPCGECKKTFSQQSRLTQHLKVH), 526-548 (FSCAECGRSFRRRAHLTEHTRLH), 554-576 (FQCPECDKSFSWKASMKFHQRMH), 582-604 (FACGECDKTYTHQSQLTEHLRLH), 610-632 (YQCPECEKTFRLKGNLKSHLLQH), 638-660 (FSCVMCGKSFTQQYRLTEHIRVH), 666-688 (FQCPECDKSYCIRGSLKVHLYKH), 694-716 (FQCPECGKGFLQKRSLKAHLCLH), and 722-744 (FSCDECGRSFTYVGALKTHIAVH).

This sequence belongs to the krueppel C2H2-type zinc-finger protein family.

Its subcellular location is the nucleus. It localises to the cytoplasm. Acts as a transcriptional repressor. The chain is Zinc finger protein 425 (ZNF425) from Homo sapiens (Human).